Consider the following 493-residue polypeptide: Gamma-aminobutyric acid receptor subunit alpha-3 (493 aa).

The first 28 residues, 1 to 28 (MITTQMWHFYVTRVGLLLLISILPGTTG), serve as a signal peptide directing secretion. The tract at residues 27-54 (TGQGESRRQEPGDFVKQDIGGLSPKHAP) is disordered. The Extracellular segment spans residues 29-276 (QGESRRQEPG…THFHLKRKIG (248 aa)). Positions 31–42 (ESRRQEPGDFVK) are enriched in basic and acidic residues. N-linked (GlcNAc...) asparagine glycosylation is present at Asn-63. Arg-119 contributes to the 4-aminobutanoate binding site. Residues Asn-163 and Asn-176 are each glycosylated (N-linked (GlcNAc...) asparagine). Thr-182 is a binding site for 4-aminobutanoate. Residues Cys-191 and Cys-205 are joined by a disulfide bond. A glycan (N-linked (GlcNAc...) asparagine) is linked at Asn-228. 3 helical membrane-spanning segments follow: residues 277–298 (YFVI…VSFW), 304–325 (VPAR…SISA), and 338–359 (MDWF…FATV). At 360-458 (NYFTKRSWAW…TYNSVSKVDK (99 aa)) the chain is on the cytoplasmic side. Residue Ser-427 is modified to Phosphoserine. Residue Thr-428 is modified to Phosphothreonine. Phosphoserine occurs at positions 434 and 443. The helical transmembrane segment at 459–480 (ISRIIFPVLFAIFNLVYWATYV) threads the bilayer.

Belongs to the ligand-gated ion channel (TC 1.A.9) family. Gamma-aminobutyric acid receptor (TC 1.A.9.5) subfamily. GABRA3 sub-subfamily. Heteropentamer, formed by a combination of alpha (GABRA1-6), beta (GABRB1-3), gamma (GABRG1-3), delta (GABRD), epsilon (GABRE), rho (GABRR1-3), pi (GABRP) and theta (GABRQ) chains, each subunit exhibiting distinct physiological and pharmacological properties. Binds UBQLN1. Interacts with GPHN. In terms of tissue distribution, expressed in most brain regions. Expressed in lungs, in alveolar epithelium.

It is found in the postsynaptic cell membrane. It localises to the cell membrane. It carries out the reaction chloride(in) = chloride(out). In terms of biological role, alpha subunit of the heteropentameric ligand-gated chloride channel gated by gamma-aminobutyric acid (GABA), a major inhibitory neurotransmitter in the brain. GABA-gated chloride channels, also named GABA(A) receptors (GABAAR), consist of five subunits arranged around a central pore and contain GABA active binding site(s) located at the alpha and beta subunit interface(s). When activated by GABA, GABAARs selectively allow the flow of chloride anions across the cell membrane down their electrochemical gradient. Chloride influx into the postsynaptic neuron following GABAAR opening decreases the neuron ability to generate a new action potential, thereby reducing nerve transmission. This Rattus norvegicus (Rat) protein is Gamma-aminobutyric acid receptor subunit alpha-3.